Reading from the N-terminus, the 114-residue chain is U17-barytoxin-Tl1a (114 aa).

Positions 1–20 (MKTIIVFLSLLVLATKFGDA) are cleaved as a signal peptide. Residues 21–74 (NEGVNQEQMKEVIQNEFREDFLNEMAPMSLLQQLEAIESTLLEKEADRNSRQKR) constitute a propeptide that is removed on maturation. Cystine bridges form between Cys75–Cys88, Cys82–Cys93, and Cys87–Cys108.

Belongs to the neurotoxin 14 (magi-1) family. 03 (ICK-30-40) subfamily. Expressed by the venom gland.

It is found in the secreted. Ion channel inhibitor. The protein is U17-barytoxin-Tl1a of Trittame loki (Brush-footed trapdoor spider).